A 116-amino-acid chain; its full sequence is Somatostatin (116 aa).

An N-terminal signal peptide occupies residues 1-24 (MLSCRLQCALAALCIVLALGGVTG). Positions 35 to 88 (LQKSLAAATGKQELAKYFLAELLSEPNQTENDALEPEDLPQAAEQDEMRLELQR) are excised as a propeptide. Thr43 is modified (threonine amide). A disulfide bond links Cys105 and Cys116.

It belongs to the somatostatin family. In terms of processing, C-terminal amidation of the neuronostatin peptide is required for its biological activity, including for the regulation of mean arterial pressure. In the pancreas, somatostatin is expressed in delta cells of the islets of Langerhans. In the stomach, it is expressed in parietal cells of oxyntic mucosa and in the small intestine, it is found in the villus (at protein level). Neuronostatin is expressed in the pancreas in delta cells of the islets of Langerhans, as well as in the stomach, in parietal cells of oxyntic mucosa and in the small intestine, in the villus (at protein level).

The protein localises to the secreted. Its function is as follows. Inhibits the secretion of pituitary hormones, including that of growth hormone/somatotropin (GH1), PRL, ACTH, luteinizing hormone (LH) and TSH. Also impairs ghrelin- and GnRH-stimulated secretion of GH1 and LH; the inhibition of ghrelin-stimulated secretion of GH1 can be further increased by neuronostatin. Functionally, may enhance low-glucose-induced glucagon release by pancreatic alpha cells. This effect may be mediated by binding to GPR107 and PKA activation. May regulate cardiac contractile function. May compromise cardiomyocyte viability. In the central nervous system, may impair memory retention and may affect hippocampal excitability. May also have anxiolytic and anorexigenic effects. May play a role in arterial pressure regulation. May inhibit basal, but not ghrelin- or GnRH-stimulated secretion of GH1 or LH, but does not affect the release of other pituitary hormones, including PRL, ACTH, FSH or TSH. Potentiates inhibitory action of somatostatin on ghrelin-stimulated secretion of GH1, but not that on GnRH-stimulated secretion of LH. The sequence is that of Somatostatin (Sst) from Mus musculus (Mouse).